Here is a 410-residue protein sequence, read N- to C-terminus: Peptidase T (410 aa).

H79 is a Zn(2+) binding site. Residue D81 is part of the active site. Zn(2+) is bound at residue D142. Residue E176 is the Proton acceptor of the active site. Zn(2+) contacts are provided by E177, D199, and H381.

The protein belongs to the peptidase M20B family. Requires Zn(2+) as cofactor.

It localises to the cytoplasm. The catalysed reaction is Release of the N-terminal residue from a tripeptide.. Its function is as follows. Cleaves the N-terminal amino acid of tripeptides. The polypeptide is Peptidase T (Bacillus thuringiensis (strain Al Hakam)).